Consider the following 397-residue polypeptide: Cytochrome b (397 aa).

A run of 4 helical transmembrane segments spans residues 38–58 (FGSL…FLAM), 82–104 (WLLR…LHIF), 119–139 (VWCL…IGYV), and 185–205 (FFSL…LHLA). Heme b is bound by residues histidine 88 and histidine 102. Histidine 189 and histidine 203 together coordinate heme b. Histidine 208 is an a ubiquinone binding site. A run of 4 helical transmembrane segments spans residues 231–251 (FYVK…IWIF), 295–315 (AGGV…PFFK), 327–347 (IYQG…WIGC), and 354–373 (FVTI…AITP).

Belongs to the cytochrome b family. In terms of assembly, the main subunits of complex b-c1 are: cytochrome b, cytochrome c1 and the Rieske protein. Heme b serves as cofactor.

Its subcellular location is the mitochondrion inner membrane. In terms of biological role, component of the ubiquinol-cytochrome c reductase complex (complex III or cytochrome b-c1 complex) that is part of the mitochondrial respiratory chain. The b-c1 complex mediates electron transfer from ubiquinol to cytochrome c. Contributes to the generation of a proton gradient across the mitochondrial membrane that is then used for ATP synthesis. The protein is Cytochrome b (MT-CYB) of Oryza sativa subsp. japonica (Rice).